An 878-amino-acid polypeptide reads, in one-letter code: Phosphoenolpyruvate carboxylase (878 aa).

Active-site residues include His-138 and Lys-544.

This sequence belongs to the PEPCase type 1 family. The cofactor is Mg(2+).

The catalysed reaction is oxaloacetate + phosphate = phosphoenolpyruvate + hydrogencarbonate. In terms of biological role, forms oxaloacetate, a four-carbon dicarboxylic acid source for the tricarboxylic acid cycle. The sequence is that of Phosphoenolpyruvate carboxylase from Psychromonas ingrahamii (strain DSM 17664 / CCUG 51855 / 37).